A 121-amino-acid polypeptide reads, in one-letter code: Small ribosomal subunit protein uS11 (121 aa).

It belongs to the universal ribosomal protein uS11 family. As to quaternary structure, part of the 30S ribosomal subunit. Interacts with proteins S7 and S18. Binds to IF-3.

Located on the platform of the 30S subunit, it bridges several disparate RNA helices of the 16S rRNA. Forms part of the Shine-Dalgarno cleft in the 70S ribosome. This chain is Small ribosomal subunit protein uS11, found in Mycoplasma pneumoniae (strain ATCC 29342 / M129 / Subtype 1) (Mycoplasmoides pneumoniae).